Consider the following 238-residue polypeptide: Large ribosomal subunit protein uL2 (238 aa).

Residues 1–11 (MGKRLISQNRG) show a composition bias toward polar residues. Disordered regions lie at residues 1-22 (MGKRLISQNRGRGTPTYRAPSH) and 202-223 (FGGGAWKHPGKPTTVSRNAPPG).

This sequence belongs to the universal ribosomal protein uL2 family. Part of the 50S ribosomal subunit. Forms a bridge to the 30S subunit in the 70S ribosome.

In terms of biological role, one of the primary rRNA binding proteins. Required for association of the 30S and 50S subunits to form the 70S ribosome, for tRNA binding and peptide bond formation. It has been suggested to have peptidyltransferase activity; this is somewhat controversial. Makes several contacts with the 16S rRNA in the 70S ribosome. The sequence is that of Large ribosomal subunit protein uL2 from Methanosarcina mazei (strain ATCC BAA-159 / DSM 3647 / Goe1 / Go1 / JCM 11833 / OCM 88) (Methanosarcina frisia).